Here is a 156-residue protein sequence, read N- to C-terminus: Ribosomal RNA large subunit methyltransferase H (156 aa).

S-adenosyl-L-methionine is bound by residues L73, G104, and 123–128 (LSSLTL).

Belongs to the RNA methyltransferase RlmH family. As to quaternary structure, homodimer.

The protein localises to the cytoplasm. The enzyme catalyses pseudouridine(1915) in 23S rRNA + S-adenosyl-L-methionine = N(3)-methylpseudouridine(1915) in 23S rRNA + S-adenosyl-L-homocysteine + H(+). Functionally, specifically methylates the pseudouridine at position 1915 (m3Psi1915) in 23S rRNA. In Neisseria gonorrhoeae (strain NCCP11945), this protein is Ribosomal RNA large subunit methyltransferase H.